The chain runs to 424 residues: Splicing factor 3B subunit 4 (424 aa).

Ala-2 carries the N-acetylalanine modification. 2 consecutive RRM domains span residues Ala-13–Ala-91 and Ala-100–Lys-179. Residue Tyr-56 is modified to Phosphotyrosine. Residues Pro-207–Gln-424 form a disordered region. Residues Asn-222 to Gly-231 show a composition bias toward low complexity. The segment covering Leu-232 to Pro-268 has biased composition (pro residues). Residues His-303–His-323 are compositionally biased toward low complexity. Pro residues-rich tracts occupy residues Gln-332–Pro-381 and Pro-388–Gln-424.

It belongs to the SF3B4 family. In terms of assembly, component of the 17S U2 SnRNP complex, a ribonucleoprotein complex that contains small nuclear RNA (snRNA) U2 and a number of specific proteins. Part of the SF3B subcomplex of the 17S U2 SnRNP complex. SF3B associates with the splicing subcomplex SF3A and a 12S RNA unit to form the U2 small nuclear ribonucleoproteins complex (U2 snRNP). SF3B4 has been found in complex spliceosome 'B' and 'C' as well. Component of the minor (U12-type spliceosome) spliceosome. Found in a complex with PRMT9, SF3B2 and SF3B4.

It is found in the nucleus. In terms of biological role, component of the 17S U2 SnRNP complex of the spliceosome, a large ribonucleoprotein complex that removes introns from transcribed pre-mRNAs. The 17S U2 SnRNP complex (1) directly participates in early spliceosome assembly and (2) mediates recognition of the intron branch site during pre-mRNA splicing by promoting the selection of the pre-mRNA branch-site adenosine, the nucleophile for the first step of splicing. Within the 17S U2 SnRNP complex, SF3B4 is part of the SF3B subcomplex, which is required for 'A' complex assembly formed by the stable binding of U2 snRNP to the branchpoint sequence in pre-mRNA. Sequence independent binding of SF3A and SF3B subcomplexes upstream of the branch site is essential, it may anchor U2 snRNP to the pre-mRNA. May also be involved in the assembly of the 'E' complex. Also acts as a component of the minor spliceosome, which is involved in the splicing of U12-type introns in pre-mRNAs. This Rattus norvegicus (Rat) protein is Splicing factor 3B subunit 4 (Sf3b4).